Here is a 357-residue protein sequence, read N- to C-terminus: UDP-N-acetylglucosamine--N-acetylmuramyl-(pentapeptide) pyrophosphoryl-undecaprenol N-acetylglucosamine transferase (357 aa).

Arg166, Ser196, and Gln290 together coordinate UDP-N-acetyl-alpha-D-glucosamine.

Belongs to the glycosyltransferase 28 family. MurG subfamily.

Its subcellular location is the cell membrane. It carries out the reaction Mur2Ac(oyl-L-Ala-gamma-D-Glu-L-Lys-D-Ala-D-Ala)-di-trans,octa-cis-undecaprenyl diphosphate + UDP-N-acetyl-alpha-D-glucosamine = beta-D-GlcNAc-(1-&gt;4)-Mur2Ac(oyl-L-Ala-gamma-D-Glu-L-Lys-D-Ala-D-Ala)-di-trans,octa-cis-undecaprenyl diphosphate + UDP + H(+). It participates in cell wall biogenesis; peptidoglycan biosynthesis. In terms of biological role, cell wall formation. Catalyzes the transfer of a GlcNAc subunit on undecaprenyl-pyrophosphoryl-MurNAc-pentapeptide (lipid intermediate I) to form undecaprenyl-pyrophosphoryl-MurNAc-(pentapeptide)GlcNAc (lipid intermediate II). The polypeptide is UDP-N-acetylglucosamine--N-acetylmuramyl-(pentapeptide) pyrophosphoryl-undecaprenol N-acetylglucosamine transferase (Staphylococcus epidermidis (strain ATCC 35984 / DSM 28319 / BCRC 17069 / CCUG 31568 / BM 3577 / RP62A)).